The following is a 463-amino-acid chain: Cytochrome c-552 (463 aa).

The first 23 residues, 1–23, serve as a signal peptide directing secretion; that stretch reads MNVKSIALSAVIATSFLAAGAMA. Residue histidine 83 coordinates heme c. Cysteine 111, cysteine 114, and lysine 115 together coordinate heme. The heme c site is built by cysteine 149, cysteine 152, histidine 153, cysteine 191, cysteine 194, and histidine 195. Ca(2+) contacts are provided by glutamate 197, tyrosine 198, lysine 246, and glutamine 248. Tyrosine 198 contributes to the substrate binding site. Residue histidine 249 participates in substrate binding. 9 residues coordinate heme c: histidine 260, cysteine 267, cysteine 270, histidine 271, histidine 286, cysteine 299, cysteine 302, histidine 303, and histidine 378.

The protein belongs to the cytochrome c-552 family. It depends on Ca(2+) as a cofactor. The cofactor is heme c.

The protein resides in the periplasm. It catalyses the reaction 6 Fe(III)-[cytochrome c] + NH4(+) + 2 H2O = 6 Fe(II)-[cytochrome c] + nitrite + 8 H(+). The protein operates within nitrogen metabolism; nitrate reduction (assimilation). Functionally, catalyzes the reduction of nitrite to ammonia, consuming six electrons in the process. This is Cytochrome c-552 from Shewanella frigidimarina (strain NCIMB 400).